The following is a 52-amino-acid chain: Disintegrin multisquamatin (52 aa).

Positions 1–50 (EGEECESGPCCRNCKFLKEGTICKRARGDDMDDYCNGKTCDCPRNPHKGP) constitute a Disintegrin domain. Intrachain disulfides connect Cys5/Cys14, Cys10/Cys35, Cys11/Cys40, and Cys23/Cys42. The short motif at 27-29 (RGD) is the Cell attachment site element.

This sequence belongs to the venom metalloproteinase (M12B) family. P-II subfamily. P-IIa sub-subfamily. Monomer. Expressed by the venom gland.

It is found in the secreted. In terms of biological role, inhibits ADP-induced human, canine and rabbit platelet aggregation by binding with high affinity to alpha-IIb/beta-3 (ITGA2B/ITGB3). The polypeptide is Disintegrin multisquamatin (Echis multisquamatus (Central Asian sand viper)).